We begin with the raw amino-acid sequence, 193 residues long: Probable thymidylate kinase (193 aa).

Residue 7–14 participates in ATP binding; it reads GIDGSGKT.

This sequence belongs to the thymidylate kinase family.

The enzyme catalyses dTMP + ATP = dTDP + ADP. The chain is Probable thymidylate kinase from Pyrobaculum calidifontis (strain DSM 21063 / JCM 11548 / VA1).